A 590-amino-acid chain; its full sequence is Arginine--tRNA ligase (590 aa).

The short motif at 138–148 (ANPTGPLHIGH) is the 'HIGH' region element.

It belongs to the class-I aminoacyl-tRNA synthetase family. As to quaternary structure, monomer.

The protein localises to the cytoplasm. It catalyses the reaction tRNA(Arg) + L-arginine + ATP = L-arginyl-tRNA(Arg) + AMP + diphosphate. The polypeptide is Arginine--tRNA ligase (Orientia tsutsugamushi (strain Ikeda) (Rickettsia tsutsugamushi)).